The chain runs to 730 residues: Elongation factor 2 (730 aa).

Residues 19–228 (QRIRNIGIVA…TGVSFKDVYD (210 aa)) form the tr-type G domain. GTP is bound by residues 28–35 (AHIDHGKT), 94–98 (DTPGH), and 148–151 (NKVD). Position 596 is a diphthamide (His596).

The protein belongs to the TRAFAC class translation factor GTPase superfamily. Classic translation factor GTPase family. EF-G/EF-2 subfamily.

The protein resides in the cytoplasm. Its function is as follows. Catalyzes the GTP-dependent ribosomal translocation step during translation elongation. During this step, the ribosome changes from the pre-translocational (PRE) to the post-translocational (POST) state as the newly formed A-site-bound peptidyl-tRNA and P-site-bound deacylated tRNA move to the P and E sites, respectively. Catalyzes the coordinated movement of the two tRNA molecules, the mRNA and conformational changes in the ribosome. The chain is Elongation factor 2 from Methanosarcina acetivorans (strain ATCC 35395 / DSM 2834 / JCM 12185 / C2A).